The chain runs to 399 residues: PCI domain-containing protein 2 (399 aa).

The 182-residue stretch at 210-391 (VTFKYYVGRK…QKLVVSKQNP (182 aa)) folds into the PCI domain.

Belongs to the CSN12 family.

The sequence is that of PCI domain-containing protein 2 (pcid2) from Xenopus laevis (African clawed frog).